Reading from the N-terminus, the 118-residue chain is Ribonuclease P protein component (118 aa).

It belongs to the RnpA family. As to quaternary structure, consists of a catalytic RNA component (M1 or rnpB) and a protein subunit.

The catalysed reaction is Endonucleolytic cleavage of RNA, removing 5'-extranucleotides from tRNA precursor.. RNaseP catalyzes the removal of the 5'-leader sequence from pre-tRNA to produce the mature 5'-terminus. It can also cleave other RNA substrates such as 4.5S RNA. The protein component plays an auxiliary but essential role in vivo by binding to the 5'-leader sequence and broadening the substrate specificity of the ribozyme. This chain is Ribonuclease P protein component, found in Photobacterium profundum (strain SS9).